The following is an 813-amino-acid chain: LPS-assembly protein LptD (813 aa).

The disordered stretch occupies residues 1–29; that stretch reads MTEQRRSPNNRALPSPAPTSVPARARRAG. An N-terminal signal peptide occupies residues 1–52; the sequence is MTEQRRSPNNRALPSPAPTSVPARARRAGGLHAGALRPLVLAMASLSAGAHA.

The protein belongs to the LptD family. In terms of assembly, component of the lipopolysaccharide transport and assembly complex. Interacts with LptE and LptA.

It is found in the cell outer membrane. In terms of biological role, together with LptE, is involved in the assembly of lipopolysaccharide (LPS) at the surface of the outer membrane. The polypeptide is LPS-assembly protein LptD (Cupriavidus necator (strain ATCC 17699 / DSM 428 / KCTC 22496 / NCIMB 10442 / H16 / Stanier 337) (Ralstonia eutropha)).